Consider the following 254-residue polypeptide: Glutamate racemase (254 aa).

Substrate-binding positions include 7 to 8 and 39 to 40; these read DS and YG. C70 acts as the Proton donor/acceptor in catalysis. 71 to 72 provides a ligand contact to substrate; it reads NT. C178 (proton donor/acceptor) is an active-site residue. 179-180 is a substrate binding site; that stretch reads TH.

The protein belongs to the aspartate/glutamate racemases family.

The catalysed reaction is L-glutamate = D-glutamate. Its pathway is cell wall biogenesis; peptidoglycan biosynthesis. Its function is as follows. Provides the (R)-glutamate required for cell wall biosynthesis. The sequence is that of Glutamate racemase from Aquifex aeolicus (strain VF5).